The sequence spans 245 residues: tRNA pseudouridine synthase A 2 (245 aa).

Catalysis depends on Asp-53, which acts as the Nucleophile. Tyr-111 is a substrate binding site.

This sequence belongs to the tRNA pseudouridine synthase TruA family. As to quaternary structure, homodimer.

The catalysed reaction is uridine(38/39/40) in tRNA = pseudouridine(38/39/40) in tRNA. In terms of biological role, formation of pseudouridine at positions 38, 39 and 40 in the anticodon stem and loop of transfer RNAs. The chain is tRNA pseudouridine synthase A 2 from Bacillus thuringiensis subsp. konkukian (strain 97-27).